The sequence spans 739 residues: Catalase-peroxidase (739 aa).

Residues 99-227 constitute a cross-link (tryptophyl-tyrosyl-methioninium (Trp-Tyr) (with M-253)); it reads WHSAGTYRMG…LAAVQMGLIY (129 aa). Catalysis depends on His100, which acts as the Proton acceptor. The segment at residues 227–253 is a cross-link (tryptophyl-tyrosyl-methioninium (Tyr-Met) (with W-99)); sequence YVNPEGPDGNPDPVASGRDVRETFARM. Residue His268 coordinates heme b.

Belongs to the peroxidase family. Peroxidase/catalase subfamily. As to quaternary structure, homodimer or homotetramer. Requires heme b as cofactor. In terms of processing, formation of the three residue Trp-Tyr-Met cross-link is important for the catalase, but not the peroxidase activity of the enzyme.

The catalysed reaction is H2O2 + AH2 = A + 2 H2O. It catalyses the reaction 2 H2O2 = O2 + 2 H2O. In terms of biological role, bifunctional enzyme with both catalase and broad-spectrum peroxidase activity. The chain is Catalase-peroxidase from Syntrophotalea carbinolica (strain DSM 2380 / NBRC 103641 / GraBd1) (Pelobacter carbinolicus).